Consider the following 505-residue polypeptide: Ribose import ATP-binding protein RbsA 2 (505 aa).

ABC transporter domains follow at residues 13–249 and 259–503; these read LALE…VGRD and VRAG…TGRA. 45 to 52 provides a ligand contact to ATP; that stretch reads GENGAGKS.

Belongs to the ABC transporter superfamily. Ribose importer (TC 3.A.1.2.1) family. In terms of assembly, the complex is composed of an ATP-binding protein (RbsA), two transmembrane proteins (RbsC) and a solute-binding protein (RbsB).

The protein localises to the cell membrane. The catalysed reaction is D-ribose(out) + ATP + H2O = D-ribose(in) + ADP + phosphate + H(+). Functionally, part of the ABC transporter complex RbsABC involved in ribose import. Responsible for energy coupling to the transport system. The sequence is that of Ribose import ATP-binding protein RbsA 2 from Streptomyces avermitilis (strain ATCC 31267 / DSM 46492 / JCM 5070 / NBRC 14893 / NCIMB 12804 / NRRL 8165 / MA-4680).